Here is a 512-residue protein sequence, read N- to C-terminus: SNF1-related protein kinase catalytic subunit alpha KIN10 (512 aa).

One can recognise a Protein kinase domain in the interval 19–271 (YKLGRTLGIG…IPEIRQHPWF (253 aa)). A Glycyl lysine isopeptide (Lys-Gly) (interchain with G-Cter in ubiquitin) cross-link involves residue K20. An ATP-binding site is contributed by 25–33 (LGIGSFGRV). A Glycyl lysine isopeptide (Lys-Gly) (interchain with G-Cter in SUMO) cross-link involves residue K34. K48 is a binding site for ATP. K63 is covalently cross-linked (Glycyl lysine isopeptide (Lys-Gly) (interchain with G-Cter in SUMO)). The active-site Proton acceptor is D142. A Phosphoserine modification is found at S164. Position 175 is a phosphothreonine; by GRIK1 or GRIK2 (T175). The tract at residues 290–389 (AKKIDEEILQ…GLRSQYPVER (100 aa)) is auto-inhibitory domain (AID). One can recognise a UBA domain in the interval 292-332 (KIDEEILQEVINMGFDRNHLIESLRNRTQNDGTVTYYLILD). Residues 294 to 512 (DEEILQEVIN…AAFLAQLRVL (219 aa)) are regulatory domain (RD). Residue S364 is modified to Phosphoserine. A Glycyl lysine isopeptide (Lys-Gly) (interchain with G-Cter in SUMO) cross-link involves residue K390. Residues 390 to 512 (KWALGLQSRA…AAFLAQLRVL (123 aa)) form a PPI region. In terms of domain architecture, KA1 spans 463–511 (AVKSPNVVKFEIQLYKTRDDKYLLDLQRVQGPQFLFLDLCAAFLAQLRV).

This sequence belongs to the protein kinase superfamily. CAMK Ser/Thr protein kinase family. SNF1 subfamily. In terms of assembly, subunit of a probable heterotrimeric complex consisting of an alpha catalytic (KIN10 or KIN11) subunit, and a beta (KINB) and a gamma (KING or SNF4) non-catalytic regulatory subunits. Interacts with KINB2, KINB3, SNF4 and probably with KINB1 and KING1. Interacts with SKP1/ASK1, PAD1, the N-terminus of PRL1 and the WD40 domain of 5PTase13. Potential subunit of a SCF ubiquitin ligase complex consisting of a SNF1-related protein kinase, SKP1 and CUL1. The association of the SCF complex with the proteasome may be mediated by PAD1 and seems to be inhibited by the interaction with PRL1. Interacts with ATAF1. Interacts with ESD4. Interacts with SCE1. Interacts with FUS3. Interacts with PP2C74. Interacts with CDKE1. Interacts with ABI1 and PP2CA. Interacts with KRP6. Interacts with CIPK14. Interacts with FLZ proteins through their FLZ-type zinc finger domains. Interacts with GEBP/STKR1. Interacts with MYC2. Interacts with IDD8. Interacts with BZIP63. Interacts with PTL. Interacts with FLZ3, FLZ9, TCP3, TCP13, HB21/ZHD3 and HB23/ZHD10. Interacts with PTP1. Interacts with RAPTOR1B. Forms oligomers in vitro under strongly reducing conditions. Interacts with WRI1. Interacts with EIN3. Component of a ternary complex composed of BZIP2-BZIP63 heterodimer and KIN10. Interacts with IPK2b. Interacts with FLZ6 and FLZ10. Phosphorylated at Thr-175 in response to glucose. Phosphorylated at Thr-175 under submergence. Autophosphorylated. Dephosphorylated at Thr-175 by ABI1 and PP2CA. In terms of processing, ubiquitinated. Degradation is mediated by a CUL4-based E3 ligase that uses PRL1 as a substrate receptor. Post-translationally, sumoylated by SIZ1. Sumoylated SnRK1 is ubiquitinated and degraded by the proteasome. In terms of tissue distribution, isoform 2 is widely expressed, especially in newly developing tissues. Isoform 2 is expressed throughout the seedling, with highest expression in leaf primordia and vascular tissue, and the seedling root tip. Isoform 2 is later expressed in developing lateral root primordia and developing embryos within siliques. Isoform 1 is widely expressed but at very low levels.

The protein resides in the plastid. It localises to the chloroplast. Its subcellular location is the cytoplasm. It is found in the nucleus. The protein localises to the golgi apparatus. The protein resides in the endoplasmic reticulum. The enzyme catalyses L-seryl-[protein] + ATP = O-phospho-L-seryl-[protein] + ADP + H(+). It catalyses the reaction L-threonyl-[protein] + ATP = O-phospho-L-threonyl-[protein] + ADP + H(+). Activated by phosphorylation at Thr-175 by GRIK1/SNAK2 and GRIK2/SNAK1. Inactivated by dephosphorylation at Thr-175. Inhibited by trehalose-6-phosphate. Down-regulated by SR45 by affecting its stability. Reduced kinase activity in response to H(2)O(2) treatment. The redox-state of Cys-177 seems to directly influence its kinase activity. Down-regulated by FLZ6 and FLZ10. In terms of biological role, catalytic subunit of the probable trimeric SNF1-related protein kinase (SnRK) complex, a central regulator of cellular energy homeostasis, which, in response to seemingly unrelated darkness, sugar and stress conditions, activates energy-producing pathways and inhibits energy-consuming processes. May play a role in a signal transduction cascade regulating gene expression and carbohydrate metabolism in higher plants. The SnRK complex may also be involved in the regulation of fatty acid synthesis by phosphorylation of acetyl-CoA carboxylase and in assimilation of nitrogen by phosphorylating nitrate reductase. In vitro, KIN10 exhibits kinase activity on sucrose phosphate synthase and the kinase activity is inhibited by PRL1. May be a subunit of a SCF ubiquitin ligase complex and thus be involved in proteasomal ubiquitination. Phosphorylates GRIK1/SNAK2 and GRIK2/SNAK1 in vitro. Cooperates with FUS3 to regulate developmental phase transitions and lateral organ development and act both as positive regulators of abscisic acid (ABA) signaling during germination. Phosphorylates FUS3 in embryo. Negatively modulates MYC2 accumulation through its protein phosphorylation. Phosphorylates geminivirus (CaLCuV, TGMV, ToMoV) AL2 protein resulting in a delay in the viral DNA accumulation and symptom appearance during infection. Regulates bZIP63 activity to alter metabolism in response to starvation through its protein phosphorylation. Under sugar deprivation conditions, antagonizes the IDD8 function in flowering time control by its protein phosphorylation. Plays a cardinal role in the control of cell proliferation through inhibition of KRP6 activity by its protein phosphorylation. Under submergence, phosphorylates PTP1, leading to the release of the MPK6 signaling pathway inhibition. Triggers its own SUMO-mediated proteasomal degradation, establishing a negative feedback loop that attenuates SnRK1 signaling and prevents detrimental hyperactivation of stress responses. Phosphorylates RAPTOR1B in vitro. Phosphorylates and down-regulates HMGR1S in vitro. Kinase activity is redox-sensitive. Acts upstream of TOR in the regulation of autophagy. Required for the activation of autophagy by many abiotic stresses. Involved in positive regulation of autophagy, possibly by affecting the phosphorylation of ATG1 proteins. Negatively modulates WRI1 accumulation through its protein phosphorylation. Modulates leaf senescence progression by the negative regulation of EIN3 accumulation through its protein phosphorylation. Under extended darkness, C/S1-bZIP-SnRK1 complex interacts with the histone acetylation machinery to remodel chromatin and facilitate transcription. BZIP2-BZIP63-KIN10 complex binds to the ETFQO promoter to up-regulate its transcription. Phosphorylates and down-regulates IPK2b in vitro. Involved in the regulation of sucrose-induced hypocotyl elongation under light/dark cycles. The chain is SNF1-related protein kinase catalytic subunit alpha KIN10 from Arabidopsis thaliana (Mouse-ear cress).